A 76-amino-acid polypeptide reads, in one-letter code: UPF0352 protein ECA2748 (76 aa).

Belongs to the UPF0352 family.

The polypeptide is UPF0352 protein ECA2748 (Pectobacterium atrosepticum (strain SCRI 1043 / ATCC BAA-672) (Erwinia carotovora subsp. atroseptica)).